A 439-amino-acid chain; its full sequence is Hydrogenobyrinate a,c-diamide synthase (439 aa).

Residues 247–439 (RIALAEDGAF…FFHAIARASA (193 aa)) enclose the GATase cobBQ-type domain. Residue cysteine 329 is the Nucleophile of the active site.

Belongs to the CobB/CbiA family. It depends on Mg(2+) as a cofactor.

The enzyme catalyses hydrogenobyrinate + 2 L-glutamine + 2 ATP + 2 H2O = hydrogenobyrinate a,c-diamide + 2 L-glutamate + 2 ADP + 2 phosphate + 2 H(+). Its pathway is cofactor biosynthesis; adenosylcobalamin biosynthesis; cob(II)yrinate a,c-diamide from precorrin-2 (aerobic route): step 9/10. Its function is as follows. Catalyzes the ATP-dependent amidation of the two carboxylate groups at positions a and c of hydrogenobyrinate, using either L-glutamine or ammonia as the nitrogen source. The sequence is that of Hydrogenobyrinate a,c-diamide synthase from Mesorhizobium japonicum (strain LMG 29417 / CECT 9101 / MAFF 303099) (Mesorhizobium loti (strain MAFF 303099)).